Here is a 61-residue protein sequence, read N- to C-terminus: Beta-defensin 13 (61 aa).

The signal sequence occupies residues 1-21 (MRLLYLLFAAVMLLFLQAVPA). Serine 24, arginine 40, histidine 44, asparagine 51, asparagine 53, glycine 54, histidine 58, and lysine 61 together coordinate a 1,2-diacyl-sn-glycero-3-phosphate. Disulfide bonds link cysteine 31/cysteine 59, cysteine 38/cysteine 52, and cysteine 42/cysteine 60.

This sequence belongs to the beta-defensin family. Monomeric. Forms multimeric, probably including tetrameric, complexes in the presence of phospholipid phosphatidic acid.

The protein localises to the secreted. Its function is as follows. Exhibits antimicrobial activity against fungi. Antimicrobial activity in a pH-dependent manner against the yeast C.albicans; activity is salt tolerant and retains antifungal activity in NaCl concentrations of 100mM. Permeabilizes C.albicans cell membranes via targeting plasma membrane phospholipid phosphatidic acid. The protein is Beta-defensin 13 of Crocodylus porosus (Saltwater crocodile).